The following is a 344-amino-acid chain: Anthranilate phosphoribosyltransferase (344 aa).

Residues glycine 86, 89-90, threonine 94, 96-99, 114-122, and serine 126 each bind 5-phospho-alpha-D-ribose 1-diphosphate; these read GD, NIST, and KHGNKSASG. Residue glycine 86 participates in anthranilate binding. Serine 98 contacts Mg(2+). Asparagine 117 lines the anthranilate pocket. Arginine 172 contacts anthranilate. Positions 231 and 232 each coordinate Mg(2+).

The protein belongs to the anthranilate phosphoribosyltransferase family. Homodimer. Requires Mg(2+) as cofactor.

The catalysed reaction is N-(5-phospho-beta-D-ribosyl)anthranilate + diphosphate = 5-phospho-alpha-D-ribose 1-diphosphate + anthranilate. It functions in the pathway amino-acid biosynthesis; L-tryptophan biosynthesis; L-tryptophan from chorismate: step 2/5. Functionally, catalyzes the transfer of the phosphoribosyl group of 5-phosphorylribose-1-pyrophosphate (PRPP) to anthranilate to yield N-(5'-phosphoribosyl)-anthranilate (PRA). This is Anthranilate phosphoribosyltransferase from Prochlorococcus marinus (strain MIT 9215).